A 462-amino-acid polypeptide reads, in one-letter code: Dipeptidyl peptidase 1 (462 aa).

An N-terminal signal peptide occupies residues 1–24 (MGPWTHSLRAVLLLVLLGVCTVRS). Asn29 and Asn53 each carry an N-linked (GlcNAc...) asparagine glycan. 5 disulfides stabilise this stretch: Cys30-Cys118, Cys54-Cys136, Cys254-Cys297, Cys290-Cys330, and Cys320-Cys336. Positions 135-230 (ACFVGKKVES…DEIQQQILNL (96 aa)) are excised as a propeptide. Cys257 is a catalytic residue. N-linked (GlcNAc...) asparagine glycosylation is present at Asn275. Chloride-binding residues include Phe301 and Tyr303. Tyr346 is a binding site for chloride. Active-site residues include His404 and Asn426.

The protein belongs to the peptidase C1 family. In terms of assembly, tetramer of heterotrimers consisting of exclusion domain, heavy- and light chains. Requires chloride as cofactor. As to expression, broadly distributed, but higher levels found in lung, liver, kidney and spleen. Lower levels found in testis and brain.

It is found in the lysosome. The catalysed reaction is Release of an N-terminal dipeptide, Xaa-Yaa-|-Zaa-, except when Xaa is Arg or Lys, or Yaa or Zaa is Pro.. In terms of biological role, thiol protease. Has dipeptidylpeptidase activity. Active against a broad range of dipeptide substrates composed of both polar and hydrophobic amino acids. Proline cannot occupy the P1 position and arginine cannot occupy the P2 position of the substrate. Can act as both an exopeptidase and endopeptidase. Activates serine proteases such as elastase, cathepsin G and granzymes A and B. This chain is Dipeptidyl peptidase 1 (Ctsc), found in Mus musculus (Mouse).